We begin with the raw amino-acid sequence, 519 residues long: ATP synthase subunit alpha (519 aa).

Residue 174–181 (GDRQTGKT) coordinates ATP.

This sequence belongs to the ATPase alpha/beta chains family. In terms of assembly, F-type ATPases have 2 components, CF(1) - the catalytic core - and CF(0) - the membrane proton channel. CF(1) has five subunits: alpha(3), beta(3), gamma(1), delta(1), epsilon(1). CF(0) has three main subunits: a(1), b(2) and c(9-12). The alpha and beta chains form an alternating ring which encloses part of the gamma chain. CF(1) is attached to CF(0) by a central stalk formed by the gamma and epsilon chains, while a peripheral stalk is formed by the delta and b chains.

The protein localises to the cell inner membrane. The enzyme catalyses ATP + H2O + 4 H(+)(in) = ADP + phosphate + 5 H(+)(out). Functionally, produces ATP from ADP in the presence of a proton gradient across the membrane. The alpha chain is a regulatory subunit. This chain is ATP synthase subunit alpha, found in Paracidovorax citrulli (strain AAC00-1) (Acidovorax citrulli).